Here is a 431-residue protein sequence, read N- to C-terminus: Serine--tRNA ligase (431 aa).

237–239 (TAE) contributes to the L-serine binding site. Residue 268–270 (RSE) coordinates ATP. Residue Glu-291 coordinates L-serine. 355-358 (EISS) provides a ligand contact to ATP. Ser-390 contacts L-serine.

The protein belongs to the class-II aminoacyl-tRNA synthetase family. Type-1 seryl-tRNA synthetase subfamily. Homodimer. The tRNA molecule binds across the dimer.

It is found in the cytoplasm. It carries out the reaction tRNA(Ser) + L-serine + ATP = L-seryl-tRNA(Ser) + AMP + diphosphate + H(+). The enzyme catalyses tRNA(Sec) + L-serine + ATP = L-seryl-tRNA(Sec) + AMP + diphosphate + H(+). Its pathway is aminoacyl-tRNA biosynthesis; selenocysteinyl-tRNA(Sec) biosynthesis; L-seryl-tRNA(Sec) from L-serine and tRNA(Sec): step 1/1. Its function is as follows. Catalyzes the attachment of serine to tRNA(Ser). Is also able to aminoacylate tRNA(Sec) with serine, to form the misacylated tRNA L-seryl-tRNA(Sec), which will be further converted into selenocysteinyl-tRNA(Sec). The polypeptide is Serine--tRNA ligase (Neisseria meningitidis serogroup B (strain ATCC BAA-335 / MC58)).